The following is a 43-amino-acid chain: Cytochrome b559 subunit beta (43 aa).

A helical membrane pass occupies residues 18-34 (WLAVHGLAIPTVFFLGG). Residue His22 coordinates heme.

This sequence belongs to the PsbE/PsbF family. Heterodimer of an alpha subunit and a beta subunit. PSII is composed of 1 copy each of membrane proteins PsbA, PsbB, PsbC, PsbD, PsbE, PsbF, PsbH, PsbI, PsbJ, PsbK, PsbL, PsbM, PsbT, PsbX, PsbY, PsbZ, Psb30/Ycf12, at least 3 peripheral proteins of the oxygen-evolving complex and a large number of cofactors. It forms dimeric complexes. The cofactor is heme b.

The protein localises to the plastid. Its subcellular location is the chloroplast thylakoid membrane. Its function is as follows. This b-type cytochrome is tightly associated with the reaction center of photosystem II (PSII). PSII is a light-driven water:plastoquinone oxidoreductase that uses light energy to abstract electrons from H(2)O, generating O(2) and a proton gradient subsequently used for ATP formation. It consists of a core antenna complex that captures photons, and an electron transfer chain that converts photonic excitation into a charge separation. In Thalassiosira pseudonana (Marine diatom), this protein is Cytochrome b559 subunit beta.